Consider the following 1612-residue polypeptide: DNA (cytosine-5)-methyltransferase PliMCI (1612 aa).

The DMAP1-binding domain occupies 7 to 101 (CDQVIPPNVR…NGDTKEEASS (95 aa)). The disordered stretch occupies residues 87–338 (TCSPVNGDTK…TAESKQPPLR (252 aa)). A compositionally biased stretch (basic and acidic residues) spans 94–110 (DTKEEASSNGKDDEKAE). Over residues 115–131 (NGTTSNGSTTNGSSGSS) the composition is skewed to low complexity. A compositionally biased stretch (polar residues) spans 132-142 (KANGHTNGGYV). Over residues 143-154 (QSSSQEETGTSQ) the composition is skewed to low complexity. Composition is skewed to basic and acidic residues over residues 193–212 (VLGD…KKDV), 222–232 (EESATPDEKTL), and 260–289 (KKEE…KKEE). The segment at 626-672 (ASERKKRCGVCEICQAPDCGKCTACKDMIKFGGSGKAKQACKDRRCP) adopts a CXXC-type zinc-finger fold. 8 residues coordinate Zn(2+): Cys-633, Cys-636, Cys-639, Cys-644, Cys-647, Cys-650, Cys-666, and Cys-671. A disordered region spans residues 677–708 (QEADENDIDEMDNSSNKENKDEKKAKKGRKLE). Residues 678-688 (EADENDIDEMD) are compositionally biased toward acidic residues. Basic and acidic residues predominate over residues 691–708 (SNKENKDEKKAKKGRKLE). 2 consecutive BAH domains span residues 743–871 (EKIE…EDYE) and 967–1089 (NYRK…EDPP). The segment at 1084–1121 (CFEDPPSKSRSTRMKGKGKGKGKGKAKGKIAVEKEEEK) is disordered. The segment covering 1093–1111 (RSTRMKGKGKGKGKGKAKG) has biased composition (basic residues). The SAM-dependent MTase C5-type domain maps to 1131 to 1590 (LKCLDVFAGC…MEIKVCLQTK (460 aa)). S-adenosyl-L-methionine contacts are provided by residues 1142-1143 (GL), 1160-1161 (EK), 1182-1183 (DC), and Cys-1183. Cys-1218 is an active-site residue. S-adenosyl-L-methionine is bound by residues Asn-1569 and Val-1571.

Belongs to the class I-like SAM-binding methyltransferase superfamily. C5-methyltransferase family.

The protein resides in the nucleus. The enzyme catalyses a 2'-deoxycytidine in DNA + S-adenosyl-L-methionine = a 5-methyl-2'-deoxycytidine in DNA + S-adenosyl-L-homocysteine + H(+). Methylates CpG residues. The sequence is that of DNA (cytosine-5)-methyltransferase PliMCI (DNMT) from Paracentrotus lividus (Common sea urchin).